We begin with the raw amino-acid sequence, 395 residues long: Chalcone synthase 3 (395 aa).

An N-acetylvaline modification is found at Val2. Cys169 is a catalytic residue.

It belongs to the thiolase-like superfamily. Chalcone/stilbene synthases family.

The enzyme catalyses (E)-4-coumaroyl-CoA + 3 malonyl-CoA + 3 H(+) = 2',4,4',6'-tetrahydroxychalcone + 3 CO2 + 4 CoA. The protein operates within secondary metabolite biosynthesis; flavonoid biosynthesis. The primary product of this enzyme is 4,2',4',6'-tetrahydroxychalcone (also termed naringenin-chalcone or chalcone) which can under specific conditions spontaneously isomerize into naringenin. This Sinapis alba (White mustard) protein is Chalcone synthase 3 (CHS3).